The following is a 172-amino-acid chain: Ribosome maturation factor RimM (172 aa).

In terms of domain architecture, PRC barrel spans 96–168 (DGEFYYHEII…RVQVELMEGL (73 aa)).

This sequence belongs to the RimM family. Binds ribosomal protein uS19.

The protein localises to the cytoplasm. Its function is as follows. An accessory protein needed during the final step in the assembly of 30S ribosomal subunit, possibly for assembly of the head region. Essential for efficient processing of 16S rRNA. May be needed both before and after RbfA during the maturation of 16S rRNA. It has affinity for free ribosomal 30S subunits but not for 70S ribosomes. The sequence is that of Ribosome maturation factor RimM from Streptococcus agalactiae serotype III (strain NEM316).